Here is a 257-residue protein sequence, read N- to C-terminus: UPF0246 protein Sbal223_3241 (257 aa).

This sequence belongs to the UPF0246 family.

This chain is UPF0246 protein Sbal223_3241, found in Shewanella baltica (strain OS223).